The chain runs to 1627 residues: Formin-like protein 5 (1627 aa).

The Phosphatase tensin-type domain occupies 5–194 (RKFFLKKTPD…HYITRQGSGP (190 aa)). The active-site Phosphocysteine intermediate is the Cys-127. One can recognise a C2 tensin-type domain in the interval 200–337 (SRPLILDSIV…FRAEVVFSDP (138 aa)). Disordered regions lie at residues 370 to 413 (EAEE…LEKH), 680 to 787 (TKRE…YDSS), 801 to 1181 (KFNV…RGVV), 1241 to 1261 (AAVP…SLGS), and 1571 to 1627 (KQAE…KDVG). Composition is skewed to basic and acidic residues over residues 402–413 (VSREDSGSLEKH), 681–691 (KREESGGRRDV), 700–717 (IEAR…RQIP), and 726–742 (MPVD…EKLG). Pro residues-rich tracts occupy residues 824–835 (APPPPPPPPPPY), 852–870 (QPPP…PPPA), 877–886 (IPPPPPPPPL), 897–908 (VPPPPPPPPPPR), 931–965 (ISPP…PPSA), and 974–1168 (APPP…PPGG). Positions 1188–1588 (FGAAAARKST…RAEKEAEAEK (401 aa)) constitute an FH2 domain. Composition is skewed to basic and acidic residues over residues 1248–1261 (DSSK…SLGS) and 1571–1590 (KQAE…EKSK). A compositionally biased stretch (polar residues) spans 1600–1611 (KPSNPSRQVKQT). Over residues 1612–1627 (PDTKTRAASRRGKDVG) the composition is skewed to basic and acidic residues.

The protein belongs to the formin-like family. Class-II subfamily.

The protein is Formin-like protein 5 (FH5) of Oryza sativa subsp. japonica (Rice).